A 200-amino-acid chain; its full sequence is Imidazoleglycerol-phosphate dehydratase (200 aa).

Residues E13, 39 to 47 (HMLTLLTFH), 68 to 72 (HHLIE), R94, and R116 each bind substrate. H39, H68, H69, and E72 together coordinate Mn(2+). Mn(2+)-binding residues include E141, H165, H166, and E169. Substrate contacts are provided by residues 165 to 173 (HHIIEGMFK) and 195 to 197 (SSK).

Belongs to the imidazoleglycerol-phosphate dehydratase family. Mn(2+) serves as cofactor.

The protein resides in the cytoplasm. It catalyses the reaction D-erythro-1-(imidazol-4-yl)glycerol 3-phosphate = 3-(imidazol-4-yl)-2-oxopropyl phosphate + H2O. The protein operates within amino-acid biosynthesis; L-histidine biosynthesis; L-histidine from 5-phospho-alpha-D-ribose 1-diphosphate: step 6/9. This chain is Imidazoleglycerol-phosphate dehydratase (hisB), found in Lactococcus lactis subsp. lactis (strain IL1403) (Streptococcus lactis).